The following is a 545-amino-acid chain: Glucose-6-phosphate isomerase (545 aa).

Catalysis depends on Glu351, which acts as the Proton donor. Catalysis depends on residues His382 and Lys510.

Belongs to the GPI family.

The protein resides in the cytoplasm. It carries out the reaction alpha-D-glucose 6-phosphate = beta-D-fructose 6-phosphate. It functions in the pathway carbohydrate biosynthesis; gluconeogenesis. Its pathway is carbohydrate degradation; glycolysis; D-glyceraldehyde 3-phosphate and glycerone phosphate from D-glucose: step 2/4. In terms of biological role, catalyzes the reversible isomerization of glucose-6-phosphate to fructose-6-phosphate. The chain is Glucose-6-phosphate isomerase from Shewanella halifaxensis (strain HAW-EB4).